Consider the following 329-residue polypeptide: D-alanine--D-alanine ligase (329 aa).

An ATP-grasp domain is found at 120-326 (KLWLSAIGIP…FAHYLEQILR (207 aa)). An ATP-binding site is contributed by 150 to 205 (ALAKWGKVFIKAASQGSSVGCYSASNETDLLQGIKDAFGYSEQVLIEKAVKPRELE). Residues aspartate 280, glutamate 293, and asparagine 295 each contribute to the Mg(2+) site.

This sequence belongs to the D-alanine--D-alanine ligase family. It depends on Mg(2+) as a cofactor. The cofactor is Mn(2+).

It is found in the cytoplasm. The catalysed reaction is 2 D-alanine + ATP = D-alanyl-D-alanine + ADP + phosphate + H(+). It participates in cell wall biogenesis; peptidoglycan biosynthesis. Its function is as follows. Cell wall formation. In Aeromonas salmonicida (strain A449), this protein is D-alanine--D-alanine ligase.